The sequence spans 249 residues: MSSRYGRALTIFSPDGHLLQVEYAQEAVRKGSTAVGVRGANCVVLGVEKSSVSEMQEDRTVRKISMLDRHVALAFAGLTADARILINRGQVECQSHRLNFENQVTLEYITRYLAQLKQKYTQCNGRRPFGISCLIGGIDADGSARLFHTEPSGIFHEYKATATGRWANTVREFFEKAYSDHEVTTKCDAIKLAMRALLEVTQMSQMRLEVAVLENGKPMKMLDSVVISEIVKIVQNEKELQAKAHKMKR.

It belongs to the peptidase T1A family. In terms of assembly, the 26S proteasome consists of a 20S proteasome core and two 19S regulatory subunits. The 20S proteasome core is composed of 28 subunits that are arranged in four stacked rings, resulting in a barrel-shaped structure. The two end rings are each formed by seven alpha subunits, and the two central rings are each formed by seven beta subunits. The catalytic chamber with the active sites is on the inside of the barrel. As to expression, testis specific.

Its subcellular location is the cytoplasm. The protein localises to the nucleus. Functionally, the proteasome is a multicatalytic proteinase complex which is characterized by its ability to cleave peptides with Arg, Phe, Tyr, Leu, and Glu adjacent to the leaving group at neutral or slightly basic pH. The proteasome has an ATP-dependent proteolytic activity. This Drosophila melanogaster (Fruit fly) protein is Proteasome subunit alpha type-7-1A (Prosalpha4T1).